The following is a 296-amino-acid chain: tRNA dimethylallyltransferase (296 aa).

Residue 2 to 9 participates in ATP binding; that stretch reads GPTASGKT. 4-9 lines the substrate pocket; it reads TASGKT. Interaction with substrate tRNA regions lie at residues 27–30, 151–155, and 232–237; these read DSAL, QRLAR, and RCVGYR.

It belongs to the IPP transferase family. In terms of assembly, monomer. Mg(2+) is required as a cofactor.

It catalyses the reaction adenosine(37) in tRNA + dimethylallyl diphosphate = N(6)-dimethylallyladenosine(37) in tRNA + diphosphate. Its function is as follows. Catalyzes the transfer of a dimethylallyl group onto the adenine at position 37 in tRNAs that read codons beginning with uridine, leading to the formation of N6-(dimethylallyl)adenosine (i(6)A). The chain is tRNA dimethylallyltransferase from Shewanella pealeana (strain ATCC 700345 / ANG-SQ1).